The sequence spans 212 residues: Large ribosomal subunit protein uL3 (212 aa).

N5-methylglutamine is present on glutamine 153.

This sequence belongs to the universal ribosomal protein uL3 family. As to quaternary structure, part of the 50S ribosomal subunit. Forms a cluster with proteins L14 and L19. In terms of processing, methylated by PrmB.

In terms of biological role, one of the primary rRNA binding proteins, it binds directly near the 3'-end of the 23S rRNA, where it nucleates assembly of the 50S subunit. The polypeptide is Large ribosomal subunit protein uL3 (Acinetobacter baylyi (strain ATCC 33305 / BD413 / ADP1)).